Reading from the N-terminus, the 115-residue chain is Large ribosomal subunit protein bL19 (115 aa).

The protein belongs to the bacterial ribosomal protein bL19 family.

This protein is located at the 30S-50S ribosomal subunit interface and may play a role in the structure and function of the aminoacyl-tRNA binding site. This is Large ribosomal subunit protein bL19 from Desulforudis audaxviator (strain MP104C).